A 436-amino-acid polypeptide reads, in one-letter code: MRRDVNGVTKSRFEMFSNSDEAVINKKLPKELLLRIFSFLDVVTLCRCAQVSRAWNVLALDGSNWQRIDLFDFQRDIEGRVVENISKRCGGFLRKLSLRGCLGVGDNALRTFAQNCRNIEVLNLNGCTKTTDATCTSLSKFCSKLRHLDLASCTSITNMSLKALSEGCPLLEQLNISWCDQVTKDGIQALVRGCGGLKALFLKGCTQLEDEALKYIGAHCPELVTLNLQTCLQITDEGLITICRGCHKLQSLCASGCSNITDAILNALGQNCPRLRILEVARCSQLTDVGFTTLARNCHELEKMDLEECVQITDSTLIQLSIHCPRLQVLSLSHCELITDDGIRHLGNGACAHDQLEVIELDNCPLITDASLEHLKSCHSLERIELYDCQQITRAGIKRLRTHLPNIKVHAYFAPVTPPPSVGGSRQRFCRCCIIL.

One can recognise an F-box domain in the interval 22-68 (AVINKKLPKELLLRIFSFLDVVTLCRCAQVSRAWNVLALDGSNWQRI). 13 LRR repeats span residues 74–100 (QRDI…SLRG), 101–126 (CLGV…NLNG), 127–152 (CTKT…DLAS), 153–178 (CTSI…NISW), 179–204 (CDQV…FLKG), 205–230 (CTQL…NLQT), 231–256 (CLQI…CASG), 257–282 (CSNI…EVAR), 283–308 (CSQL…DLEE), 309–334 (CVQI…SLSH), 335–363 (CELI…ELDN), 364–388 (CPLI…ELYD), and 389–414 (CQQI…AYFA). Thr417 is modified (phosphothreonine). Ser421 bears the Phosphoserine mark.

As to quaternary structure, interacts with SKP1 and CUL1.

Its subcellular location is the cytoplasm. In terms of biological role, substrate-recognition component of the SCF (SKP1-CUL1-F-box protein)-type E3 ubiquitin ligase complex. Role in neural transmission. The polypeptide is F-box/LRR-repeat protein 20 (FBXL20) (Bos taurus (Bovine)).